Here is a 284-residue protein sequence, read N- to C-terminus: Bifunctional protein FolD (284 aa).

Residues 166–168 (GAS) and I232 contribute to the NADP(+) site.

The protein belongs to the tetrahydrofolate dehydrogenase/cyclohydrolase family. Homodimer.

The enzyme catalyses (6R)-5,10-methylene-5,6,7,8-tetrahydrofolate + NADP(+) = (6R)-5,10-methenyltetrahydrofolate + NADPH. The catalysed reaction is (6R)-5,10-methenyltetrahydrofolate + H2O = (6R)-10-formyltetrahydrofolate + H(+). It functions in the pathway one-carbon metabolism; tetrahydrofolate interconversion. Its function is as follows. Catalyzes the oxidation of 5,10-methylenetetrahydrofolate to 5,10-methenyltetrahydrofolate and then the hydrolysis of 5,10-methenyltetrahydrofolate to 10-formyltetrahydrofolate. The protein is Bifunctional protein FolD of Shewanella oneidensis (strain ATCC 700550 / JCM 31522 / CIP 106686 / LMG 19005 / NCIMB 14063 / MR-1).